The following is a 208-amino-acid chain: Large ribosomal subunit protein uL4 (208 aa).

The disordered stretch occupies residues 44–79 (QRQGTHKSKERSEISGSTRKLGRQKGGGGARRGDIN).

It belongs to the universal ribosomal protein uL4 family. As to quaternary structure, part of the 50S ribosomal subunit.

Functionally, one of the primary rRNA binding proteins, this protein initially binds near the 5'-end of the 23S rRNA. It is important during the early stages of 50S assembly. It makes multiple contacts with different domains of the 23S rRNA in the assembled 50S subunit and ribosome. In terms of biological role, forms part of the polypeptide exit tunnel. This Phocaeicola vulgatus (strain ATCC 8482 / DSM 1447 / JCM 5826 / CCUG 4940 / NBRC 14291 / NCTC 11154) (Bacteroides vulgatus) protein is Large ribosomal subunit protein uL4.